Consider the following 371-residue polypeptide: uncharacterized protein (371 aa).

H76 contacts Zn(2+). The active site involves D78. D106 is a binding site for Zn(2+). Catalysis depends on E139, which acts as the Proton acceptor. 3 residues coordinate Zn(2+): E140, D163, and H344.

The protein belongs to the peptidase M20A family. Zn(2+) serves as cofactor.

Its function is as follows. Could be a peptidase. This is an uncharacterized protein from Bacillus subtilis (strain 168).